The primary structure comprises 505 residues: ATP synthase subunit alpha (505 aa).

Residue 170 to 177 (GDRQTGKT) coordinates ATP.

This sequence belongs to the ATPase alpha/beta chains family. As to quaternary structure, F-type ATPases have 2 components, CF(1) - the catalytic core - and CF(0) - the membrane proton channel. CF(1) has five subunits: alpha(3), beta(3), gamma(1), delta(1), epsilon(1). CF(0) has four main subunits: a(1), b(1), b'(1) and c(9-12).

It localises to the cellular thylakoid membrane. The enzyme catalyses ATP + H2O + 4 H(+)(in) = ADP + phosphate + 5 H(+)(out). In terms of biological role, produces ATP from ADP in the presence of a proton gradient across the membrane. The alpha chain is a regulatory subunit. The chain is ATP synthase subunit alpha from Prochlorococcus marinus (strain SARG / CCMP1375 / SS120).